We begin with the raw amino-acid sequence, 44 residues long: Protein PsbN (44 aa).

Residues 6–26 traverse the membrane as a helical segment; it reads FFFSLFVWCLLLSITAYSLYV.

The protein belongs to the PsbN family.

Its subcellular location is the plastid. It is found in the chloroplast thylakoid membrane. May play a role in photosystem I and II biogenesis. This chain is Protein PsbN, found in Tupiella akineta (Green alga).